Consider the following 291-residue polypeptide: Homoserine kinase (291 aa).

An ATP-binding site is contributed by 79-89 (PLARGLGSSSA).

It belongs to the GHMP kinase family. Homoserine kinase subfamily.

Its subcellular location is the cytoplasm. It carries out the reaction L-homoserine + ATP = O-phospho-L-homoserine + ADP + H(+). Its pathway is amino-acid biosynthesis; L-threonine biosynthesis; L-threonine from L-aspartate: step 4/5. Its function is as follows. Catalyzes the ATP-dependent phosphorylation of L-homoserine to L-homoserine phosphate. The polypeptide is Homoserine kinase (Leuconostoc citreum (strain KM20)).